The following is a 185-amino-acid chain: Ribosome-recycling factor (185 aa).

The protein belongs to the RRF family.

Its subcellular location is the cytoplasm. In terms of biological role, responsible for the release of ribosomes from messenger RNA at the termination of protein biosynthesis. May increase the efficiency of translation by recycling ribosomes from one round of translation to another. This is Ribosome-recycling factor from Geobacter sp. (strain M21).